We begin with the raw amino-acid sequence, 160 residues long: Serine-protein kinase RsbW (160 aa).

This sequence belongs to the anti-sigma-factor family.

It catalyses the reaction L-seryl-[protein] + ATP = O-phospho-L-seryl-[protein] + ADP + H(+). The enzyme catalyses L-threonyl-[protein] + ATP = O-phospho-L-threonyl-[protein] + ADP + H(+). Its function is as follows. Negative regulator of sigma-B activity. Phosphorylates and inactivates its specific antagonist protein, RsbV. Upon phosphorylation of RsbV, RsbW is released and binds to sigma-B, thereby blocking its ability to form an RNA polymerase holoenzyme (E-sigma-B). This Bacillus velezensis (strain DSM 23117 / BGSC 10A6 / LMG 26770 / FZB42) (Bacillus amyloliquefaciens subsp. plantarum) protein is Serine-protein kinase RsbW.